We begin with the raw amino-acid sequence, 236 residues long: Oligogalacturonate-specific porin KdgM (236 aa).

The first 20 residues, 1–20 (MKIKLLTLAVASLVSVNALA), serve as a signal peptide directing secretion.

The protein belongs to the oligogalacturonate-specific porin KdgM (TC 1.B.35) family. As to quaternary structure, monomer.

The protein localises to the cell outer membrane. In terms of biological role, porin specific for oligogalacturonides. Also required for full virulence. The chain is Oligogalacturonate-specific porin KdgM (kdgM) from Dickeya dadantii (strain 3937) (Erwinia chrysanthemi (strain 3937)).